The sequence spans 291 residues: POU class 2 homeobox associating-factor 2 (291 aa).

Residues 7-29 enclose the OCA domain; that stretch reads KRVYQGVRVKHTVKDLLAEKRLR. The disordered stretch occupies residues 176 to 219; sequence AAPVADSPSLAGPDSGSSSPYRLTSGRSGSSIPSSSQPYTLQPL. Over residues 200–211 the composition is skewed to low complexity; the sequence is SGRSGSSIPSSS.

Belongs to the POU2AF family.

Transcriptional coactivator that may regulate cell type-specific differentiation pathways. The protein is POU class 2 homeobox associating-factor 2 (pou2af2) of Danio rerio (Zebrafish).